A 393-amino-acid chain; its full sequence is uncharacterized protein (393 aa).

ATP is bound at residue 67–74 (GPDGMGKS).

This is an uncharacterized protein from Mycobacterium tuberculosis (strain CDC 1551 / Oshkosh).